The primary structure comprises 598 residues: MPEIRRRPHGPILEKPALKNPTATLRRLLGYLRPHTFTLIMVFVFVTVSSILGVLSPYLIGKTIDVVFVPRRFDLLPRYMLILGTIYALTSLLFWLQGKIMLTLSQDVVFRLRKELFEKLQRVPVGFFDRTPHGDIISRVINDVDNINNVLGNSIIQFFSGIVTLAGAVIMMFRVNVILSLVTLSIVPLTVLITQIVSSQTRKYFYENQRVLGQLNGIIEEDISGLTVIKLFTREEKEMEKFDRVNESLRKVGTKAQIFSGVLPPLMNMVNNLGFALISGFGGWLALKDIITVGTIATFIGYSRQFTRPLNELSNQFNMIQMALASAERIFEILDLEEEKDDPDAVELREVRGEIEFKNVWFSYDKKKPVLKDITFHIKPGQKVALVGPTGSGKTTIVNLLMRFYDVDRGQILVDGIDIRKIKRSSLRSSIGIVLQDTILFSTTVKENLKYGNPGATDEEIKEAAKLTHSDHFIKHLPEGYETVLTDNGEDLSQGQRQLLAITRAFLANPKILILDEATSNVDTKTEKSIQAAMWKLMEGKTSIIIAHRLNTIKNADLIIVLRDGEIVEMGKHDELIQKRGFYYELFTSQYGLVVEKE.

The ABC transmembrane type-1 domain maps to 39-322 (LIMVFVFVTV…LSNQFNMIQM (284 aa)). 5 helical membrane-spanning segments follow: residues 40 to 60 (IMVFVFVTVSSILGVLSPYLI), 80 to 100 (MLILGTIYALTSLLFWLQGKI), 150 to 170 (VLGNSIIQFFSGIVTLAGAVI), 177 to 197 (VILSLVTLSIVPLTVLITQIV), and 273 to 293 (LGFALISGFGGWLALKDIITV). An ABC transporter domain is found at 355–589 (IEFKNVWFSY…RGFYYELFTS (235 aa)). Residue 388–395 (GPTGSGKT) coordinates ATP.

This sequence belongs to the ABC transporter superfamily.

The protein localises to the cell membrane. This is an uncharacterized protein from Thermotoga maritima (strain ATCC 43589 / DSM 3109 / JCM 10099 / NBRC 100826 / MSB8).